A 117-amino-acid polypeptide reads, in one-letter code: uncharacterized protein (117 aa).

It belongs to the transposase 34 family.

This is an uncharacterized protein from Sinorhizobium fredii (strain NBRC 101917 / NGR234).